The primary structure comprises 202 residues: MEKSESSTIQIAESSKDRKGKAPLLPPPVHHERAAGYKRGVAIFDLILRISAATAALAATIVMGTTEQTLPFFTQFFQFRASYDDLPTFTFFVIAMAIVTGYLILSVPFSIVCIARPVVAAPRILLILCDTLTVTLATSAAGASAAIVYLAHNGXSDANWLAICQQFNDFCQRVSGAVVAAFVSAVLLIFLVVLSAIVLKKH.

Over residues 1–13 the composition is skewed to polar residues; that stretch reads MEKSESSTIQIAE. The segment at 1–30 is disordered; the sequence is MEKSESSTIQIAESSKDRKGKAPLLPPPVH. Residues 1-42 are Cytoplasmic-facing; sequence MEKSESSTIQIAESSKDRKGKAPLLPPPVHHERAAGYKRGVA. Residues 43 to 63 form a helical membrane-spanning segment; the sequence is IFDLILRISAATAALAATIVM. Residues 64–90 are Extracellular-facing; sequence GTTEQTLPFFTQFFQFRASYDDLPTFT. The chain crosses the membrane as a helical span at residues 91–111; sequence FFVIAMAIVTGYLILSVPFSI. The Cytoplasmic segment spans residues 112 to 130; it reads VCIARPVVAAPRILLILCD. A helical transmembrane segment spans residues 131 to 151; it reads TLTVTLATSAAGASAAIVYLA. Topologically, residues 152–177 are extracellular; that stretch reads HNGXSDANWLAICQQFNDFCQRVSGA. Residues 178-198 form a helical membrane-spanning segment; the sequence is VVAAFVSAVLLIFLVVLSAIV. Residues 199-202 lie on the Cytoplasmic side of the membrane; sequence LKKH.

It belongs to the Casparian strip membrane proteins (CASP) family. In terms of assembly, homodimer and heterodimers.

It is found in the cell membrane. In terms of biological role, regulates membrane-cell wall junctions and localized cell wall deposition. Required for establishment of the Casparian strip membrane domain (CSD) and the subsequent formation of Casparian strips, a cell wall modification of the root endodermis that determines an apoplastic barrier between the intraorganismal apoplasm and the extraorganismal apoplasm and prevents lateral diffusion. The polypeptide is Casparian strip membrane protein 1 (Triphysaria pusilla (Dwarf owl's-clover)).